Here is a 328-residue protein sequence, read N- to C-terminus: uncharacterized protein (328 aa).

This is an uncharacterized protein from Saccharomyces cerevisiae (strain ATCC 204508 / S288c) (Baker's yeast).